The sequence spans 65 residues: Large ribosomal subunit protein bL33m (65 aa).

The transit peptide at 1–8 (MFLTTANL) directs the protein to the mitochondrion.

Belongs to the bacterial ribosomal protein bL33 family. Component of the mitochondrial ribosome large subunit (39S) which comprises a 16S rRNA and about 50 distinct proteins.

It is found in the mitochondrion. This is Large ribosomal subunit protein bL33m (mrpl33) from Tetraodon nigroviridis (Spotted green pufferfish).